Reading from the N-terminus, the 289-residue chain is Elongation factor Ts (289 aa).

Residues 82 to 85 (TDFV) are involved in Mg(2+) ion dislocation from EF-Tu.

It belongs to the EF-Ts family.

The protein localises to the cytoplasm. Functionally, associates with the EF-Tu.GDP complex and induces the exchange of GDP to GTP. It remains bound to the aminoacyl-tRNA.EF-Tu.GTP complex up to the GTP hydrolysis stage on the ribosome. This is Elongation factor Ts from Marinobacter nauticus (strain ATCC 700491 / DSM 11845 / VT8) (Marinobacter aquaeolei).